The following is a 386-amino-acid chain: Dual-specificity RNA methyltransferase RlmN (386 aa).

Glu-94 (proton acceptor) is an active-site residue. In terms of domain architecture, Radical SAM core spans 100-341 (EENRGTLCIS…VTTIRKTRGD (242 aa)). Cys-107 and Cys-347 are joined by a disulfide. Cys-114, Cys-118, and Cys-121 together coordinate [4Fe-4S] cluster. S-adenosyl-L-methionine is bound by residues 173–174 (GE), Ser-205, 227–229 (SLH), and Asn-304. The active-site S-methylcysteine intermediate is Cys-347.

This sequence belongs to the radical SAM superfamily. RlmN family. [4Fe-4S] cluster is required as a cofactor.

It is found in the cytoplasm. It catalyses the reaction adenosine(2503) in 23S rRNA + 2 reduced [2Fe-2S]-[ferredoxin] + 2 S-adenosyl-L-methionine = 2-methyladenosine(2503) in 23S rRNA + 5'-deoxyadenosine + L-methionine + 2 oxidized [2Fe-2S]-[ferredoxin] + S-adenosyl-L-homocysteine. The catalysed reaction is adenosine(37) in tRNA + 2 reduced [2Fe-2S]-[ferredoxin] + 2 S-adenosyl-L-methionine = 2-methyladenosine(37) in tRNA + 5'-deoxyadenosine + L-methionine + 2 oxidized [2Fe-2S]-[ferredoxin] + S-adenosyl-L-homocysteine. Functionally, specifically methylates position 2 of adenine 2503 in 23S rRNA and position 2 of adenine 37 in tRNAs. m2A2503 modification seems to play a crucial role in the proofreading step occurring at the peptidyl transferase center and thus would serve to optimize ribosomal fidelity. The protein is Dual-specificity RNA methyltransferase RlmN of Herminiimonas arsenicoxydans.